Here is a 513-residue protein sequence, read N- to C-terminus: MKNTQILILDFGSQYTQLLARRVREANIYTEVLPFDTSIEKIKEYPLLKGIILSGGPSSVYLQNAYKIDSEILNLDIAILGVCYGMQLLTQYFQGAVELADEQEFGKAIITIDDKKNPLFKNVTTESQVWMSHADHVTELPVDFKQIAHSNASIAAIAHNTKPIYGIQFHAEVTHSLQGKEMLENFLYDIAKCNKDWNLDDFIDQQIKEIKETVKDKQVILGLSGGVDSSVAAAIIGKAIGKQLTCIFVDTGLLRKNETIEVMKAYETNFDINIKLVEASDLFFSELKGIKEPEAKRKIIGKCFIDVFTDAARQHKDADFLAQGTIYPDVIESSSHGASSKTIKSHHNVGGLPEDLKFRLIEPLRNLFKDEVRQVGFKLGLPEEMINRHPFPGPGLGIRVIEEVTKDKVEILQEADAIFIKKLREWNLYNTVSQAFVTLLPVKTVGVMGDNRTYDYVVALRSVNTIDFMTATSTHLPWEFLDEVVNEIINKVDNVNRVVYDVTSKPPGTIEWE.

The region spanning Gln-5–Asp-196 is the Glutamine amidotransferase type-1 domain. Cys-83 acts as the Nucleophile in catalysis. Active-site residues include His-170 and Glu-172. Positions Trp-197 to Arg-388 constitute a GMPS ATP-PPase domain. ATP is bound at residue Ser-224–Ser-230.

Homodimer.

The catalysed reaction is XMP + L-glutamine + ATP + H2O = GMP + L-glutamate + AMP + diphosphate + 2 H(+). It participates in purine metabolism; GMP biosynthesis; GMP from XMP (L-Gln route): step 1/1. Functionally, catalyzes the synthesis of GMP from XMP. The protein is GMP synthase [glutamine-hydrolyzing] of Mesoplasma florum (strain ATCC 33453 / NBRC 100688 / NCTC 11704 / L1) (Acholeplasma florum).